A 494-amino-acid polypeptide reads, in one-letter code: Cobyric acid synthase (494 aa).

The GATase cobBQ-type domain occupies 254-453; sequence KQTVAVIAYP…LHGLFEDPGA (200 aa). Catalysis depends on Cys338, which acts as the Nucleophile. The active site involves His445.

It belongs to the CobB/CobQ family. CobQ subfamily.

It participates in cofactor biosynthesis; adenosylcobalamin biosynthesis. In terms of biological role, catalyzes amidations at positions B, D, E, and G on adenosylcobyrinic A,C-diamide. NH(2) groups are provided by glutamine, and one molecule of ATP is hydrogenolyzed for each amidation. The sequence is that of Cobyric acid synthase from Albidiferax ferrireducens (strain ATCC BAA-621 / DSM 15236 / T118) (Rhodoferax ferrireducens).